The chain runs to 238 residues: 14-3-3 family protein artA (238 aa).

The protein belongs to the 14-3-3 family.

Its function is as follows. 14-3-3 family protein that plays a role in the morphological differentiation and secondary metabolism biosynthesis. Required for normal fungal morphogenesis in an environment-dependent manner, affecting the balance between production of conidiophores and the formation of sclerotia, resistant structures that are necessary for the dissemination and survival. Acts as a positive regulator of conidiation and a negative regulator of sclerotial production. Also regulates the production of secondary metabolites such as aflatoxin, but also the indole-tetramic acid mycotoxin cyclopiazonic acid (CPA) and ustiloxin, an inhibitor of microtubule assembly. In Aspergillus flavus (strain ATCC 200026 / FGSC A1120 / IAM 13836 / NRRL 3357 / JCM 12722 / SRRC 167), this protein is 14-3-3 family protein artA.